The chain runs to 345 residues: Isopentenyl-diphosphate delta-isomerase (345 aa).

Residue 14 to 15 participates in substrate binding; sequence RK. FMN is bound by residues Ser-71, 72–74, Ser-102, and Asn-130; that span reads SMT. 102 to 104 is a binding site for substrate; the sequence is SMR. Residue Gln-165 participates in substrate binding. Mg(2+) is bound at residue Glu-166. FMN is bound by residues Lys-197, Thr-227, 277–279, and 298–299; these read GLK and AG.

It belongs to the IPP isomerase type 2 family. In terms of assembly, homooctamer. Dimer of tetramers. It depends on FMN as a cofactor. NADPH is required as a cofactor. The cofactor is Mg(2+).

The protein resides in the cytoplasm. It carries out the reaction isopentenyl diphosphate = dimethylallyl diphosphate. Involved in the biosynthesis of isoprenoids. Catalyzes the 1,3-allylic rearrangement of the homoallylic substrate isopentenyl (IPP) to its allylic isomer, dimethylallyl diphosphate (DMAPP). The polypeptide is Isopentenyl-diphosphate delta-isomerase (Rickettsia felis (strain ATCC VR-1525 / URRWXCal2) (Rickettsia azadi)).